Reading from the N-terminus, the 283-residue chain is MAVPPTYADLGKSARDVFTKGYGFGLIKLDLKTKSENGLEFTSSGSANTETTKVTGSLETKYRWTEYGLTFTEKWNTDNTLGTEITVEDQLARGLKLTFDSSFSPNTGKKNAKIKTGYKREHINLGCDVDFDIAGPSIRGALVLGYEGWLAGYQMNFETAKSRVTQSNFAVGYKTDEFQLHTNVNDGTEFGGSIYQKVNKKLETAVNLAWTAGNSNTRFGIAAKYQIDPDACFSAKVNNSSLIGLGYTQTLKPGIKLTLSALLDGKNVNAGGHKLGLGLEFQA.

A2 carries the N-acetylalanine modification. K12 is an ATP binding site. K12 is covalently cross-linked (Glycyl lysine isopeptide (Lys-Gly) (interchain with G-Cter in ubiquitin)). Phosphoserine is present on S13. T19 bears the Phosphothreonine mark. K20 contacts ATP. N6-acetyllysine; alternate is present on K20. N6-succinyllysine; alternate is present on K20. K20 is covalently cross-linked (Glycyl lysine isopeptide (Lys-Gly) (interchain with G-Cter in ubiquitin); alternate). The next 2 beta stranded transmembrane spans lie at 26-35 (LIKLDLKTKS) and 39-47 (LEFTSSGSA). Residues K53 and K61 each participate in a glycyl lysine isopeptide (Lys-Gly) (interchain with G-Cter in ubiquitin) cross-link. A beta stranded membrane pass occupies residues 54 to 64 (VTGSLETKYRW). Y67 is modified (phosphotyrosine). The next 3 membrane-spanning stretches (beta stranded) occupy residues 69 to 76 (LTFTEKWN), 80 to 89 (TLGTEITVED), and 95 to 104 (LKLTFDSSFS). T107 bears the Phosphothreonine mark. The residue at position 109 (K109) is an N6-acetyllysine; alternate. Residue K109 forms a Glycyl lysine isopeptide (Lys-Gly) (interchain with G-Cter in ubiquitin); alternate linkage. Residue K110 forms a Glycyl lysine isopeptide (Lys-Gly) (interchain with G-Cter in ubiquitin) linkage. The next 4 beta stranded transmembrane spans lie at 111–120 (NAKIKTGYKR), 123–130 (INLGCDVD), 137–145 (SIRGALVLG), and 150–158 (LAGYQMNFE). A Glycyl lysine isopeptide (Lys-Gly) (interchain with G-Cter in ubiquitin) cross-link involves residue K161. The next 6 membrane-spanning stretches (beta stranded) occupy residues 163-175 (RVTQSNFAVGYKT), 178-185 (FQLHTNVN), 189-198 (EFGGSIYQKV), 202-211 (LETAVNLAWT), 218-227 (RFGIAAKYQI), and 231-238 (ACFSAKVN). S193 is modified (phosphoserine; by NEK1). S240 is modified (phosphoserine). Position 242–244 (242–244 (LIG)) interacts with NAD(+). The chain crosses the membrane as a beta stranded span at residues 242–251 (LIGLGYTQTL). N6-acetyllysine is present on K252. Residues 254–263 (GIKLTLSALL) traverse the membrane as a beta stranded segment. 260 to 264 (SALLD) lines the NAD(+) pocket. K266 carries the post-translational modification N6-acetyllysine; alternate. A Glycyl lysine isopeptide (Lys-Gly) (interchain with G-Cter in ubiquitin); alternate cross-link involves residue K266. A beta stranded transmembrane segment spans residues 273–282 (HKLGLGLEFQ). K274 is covalently cross-linked (Glycyl lysine isopeptide (Lys-Gly) (interchain with G-Cter in ubiquitin)).

It belongs to the eukaryotic mitochondrial porin family. As to quaternary structure, homodimer and homotrimer; in response to cyclic AMP or calcium; oligomerization is required for scramblase activity. Component of the mitochondrial permeability transition pore complex (mPTPC), at least composed of SPG7, VDAC1 and PPIF. Interacts with SPG7, NIPSNAP2 and SLC25A30. Interacts with hexokinases including HK1. The HK1-VDAC1 complex interacts with ATF2. Interacts with BCL2L1. Interacts with BAK1. Interacts with RTL10/BOP (via BH3 domain). Interacts with amyloid-beta and APP; induces VDAC1 dephosphorylation. Interacts with TMEM41B. Interacts with BCAP31. Interacts with HSPA9; this interaction couples ITPR1 to VDAC1. Post-translationally, phosphorylation at Ser-193 by NEK1 promotes the closed conformational state preventing excessive mitochondrial membrane permeability and subsequent apoptotic cell death after injury. Phosphorylation by the AKT-GSK3B axis stabilizes the protein probably by preventing ubiquitin-mediated proteasomal degradation. Ubiquitinated. Undergoes monoubiquitination and polyubiquitination by PRKN; monoubiquitination at Lys-274 inhibits apoptosis, whereas polyubiquitination leads to its degradation and promotes mitophagy. Deubiquitinated by USP30. As to expression, predominantly in brain astrocytes.

Its subcellular location is the mitochondrion outer membrane. It is found in the cell membrane. The protein resides in the membrane raft. The enzyme catalyses chloride(in) = chloride(out). It carries out the reaction K(+)(in) = K(+)(out). It catalyses the reaction ATP(in) = ATP(out). The catalysed reaction is Ca(2+)(in) = Ca(2+)(out). The enzyme catalyses Na(+)(in) = Na(+)(out). It carries out the reaction Mg(2+)(in) = Mg(2+)(out). It catalyses the reaction L-glutamate(out) = L-glutamate(in). The catalysed reaction is dopamine(out) = dopamine(in). The enzyme catalyses acetylcholine(in) = acetylcholine(out). It carries out the reaction Fe(III)-[cytochrome c](out) = Fe(III)-[cytochrome c](in). It catalyses the reaction a 1,2-diacyl-sn-glycero-3-phosphocholine(in) = a 1,2-diacyl-sn-glycero-3-phosphocholine(out). The catalysed reaction is a 1,2-diacyl-sn-glycero-3-phospho-L-serine(in) = a 1,2-diacyl-sn-glycero-3-phospho-L-serine(out). Inhibited by nitric oxide. Its function is as follows. Non-selective voltage-gated ion channel that mediates the transport of anions and cations through the mitochondrion outer membrane and plasma membrane. The channel at the outer mitochondrial membrane allows diffusion of small hydrophilic molecules; in the plasma membrane it is involved in cell volume regulation and apoptosis. It adopts an open conformation at low or zero membrane potential and a closed conformation at potentials above 30-40 mV. The open state has a weak anion selectivity whereas the closed state is cation-selective. Binds various signaling molecules, including the sphingolipid ceramide, the phospholipid phosphatidylcholine, and the sterols cholesterol and oxysterol. In depolarized mitochondria, acts downstream of PRKN and PINK1 to promote mitophagy or prevent apoptosis; polyubiquitination by PRKN promotes mitophagy, while monoubiquitination by PRKN decreases mitochondrial calcium influx which ultimately inhibits apoptosis. May participate in the formation of the permeability transition pore complex (PTPC) responsible for the release of mitochondrial products that triggers apoptosis. May mediate ATP export from cells. Part of a complex composed of HSPA9, ITPR1 and VDAC1 that regulates mitochondrial calcium-dependent apoptosis by facilitating calcium transport from the ER lumen to the mitochondria intermembrane space thus providing calcium for the downstream calcium channel MCU that directly releases it into mitochondria matrix. Mediates cytochrome c efflux. Catalyzes the scrambling of phospholipids across the outer mitochondrial membrane; the mechanism is unrelated to channel activity and is capable of translocating both anionic and zwitterionic phospholipids. This is Non-selective voltage-gated ion channel VDAC1 from Bos taurus (Bovine).